We begin with the raw amino-acid sequence, 319 residues long: Acetyl-coenzyme A carboxylase carboxyl transferase subunit alpha (319 aa).

Residues 35–296 (NIDEEVHRLR…KAQLLADLAD (262 aa)) enclose the CoA carboxyltransferase C-terminal domain.

This sequence belongs to the AccA family. Acetyl-CoA carboxylase is a heterohexamer composed of biotin carboxyl carrier protein (AccB), biotin carboxylase (AccC) and two subunits each of ACCase subunit alpha (AccA) and ACCase subunit beta (AccD).

The protein localises to the cytoplasm. The catalysed reaction is N(6)-carboxybiotinyl-L-lysyl-[protein] + acetyl-CoA = N(6)-biotinyl-L-lysyl-[protein] + malonyl-CoA. It functions in the pathway lipid metabolism; malonyl-CoA biosynthesis; malonyl-CoA from acetyl-CoA: step 1/1. In terms of biological role, component of the acetyl coenzyme A carboxylase (ACC) complex. First, biotin carboxylase catalyzes the carboxylation of biotin on its carrier protein (BCCP) and then the CO(2) group is transferred by the carboxyltransferase to acetyl-CoA to form malonyl-CoA. This is Acetyl-coenzyme A carboxylase carboxyl transferase subunit alpha from Shigella sonnei (strain Ss046).